We begin with the raw amino-acid sequence, 97 residues long: Large ribosomal subunit protein bL28 (97 aa).

This sequence belongs to the bacterial ribosomal protein bL28 family.

This chain is Large ribosomal subunit protein bL28, found in Rhizorhabdus wittichii (strain DSM 6014 / CCUG 31198 / JCM 15750 / NBRC 105917 / EY 4224 / RW1) (Sphingomonas wittichii).